Reading from the N-terminus, the 74-residue chain is Exodeoxyribonuclease 7 small subunit (74 aa).

The protein belongs to the XseB family. As to quaternary structure, heterooligomer composed of large and small subunits.

It is found in the cytoplasm. It carries out the reaction Exonucleolytic cleavage in either 5'- to 3'- or 3'- to 5'-direction to yield nucleoside 5'-phosphates.. Its function is as follows. Bidirectionally degrades single-stranded DNA into large acid-insoluble oligonucleotides, which are then degraded further into small acid-soluble oligonucleotides. In Bdellovibrio bacteriovorus (strain ATCC 15356 / DSM 50701 / NCIMB 9529 / HD100), this protein is Exodeoxyribonuclease 7 small subunit.